Here is a 409-residue protein sequence, read N- to C-terminus: Killer cell lectin-like receptor subfamily G member 2 (409 aa).

Residues Met-1 to Ala-120 form a disordered region. Low complexity predominate over residues Pro-41–Ala-53. Residues Ser-72–Pro-81 show a composition bias toward pro residues. A compositionally biased stretch (low complexity) spans Pro-104–Ala-120. Phosphoserine is present on Ser-158. The tract at residues Thr-193–Pro-216 is disordered. Low complexity predominate over residues Arg-202–Pro-216. A helical membrane pass occupies residues Trp-263–Ala-283. In terms of domain architecture, C-type lectin spans Ser-300–Ala-405. Disulfide bonds link Cys-321-Cys-404 and Cys-383-Cys-396.

The protein resides in the membrane. This Homo sapiens (Human) protein is Killer cell lectin-like receptor subfamily G member 2 (KLRG2).